We begin with the raw amino-acid sequence, 470 residues long: MTVRTRFAPSPTGFLHVGGVRTALFSWLYAKHHNGQFILRIEDTDRERSTQESVQAILDGMAWLGLNFDEGPYYQTERYARYQQVAQQLLEEGKAYRCQCSKERLEALREAQLAAKEKPRYDGHCRNQSLPDSGIPYVIRFRNPDAGIVSFHDEVYGDIHVDNSELDDLILVRSDGHPTYNFAVVIDDWDMKITHVIRGDDHINNTPRQINLFKALDAPVPVFAHLPMILGEDGKRLSKRHGAVSVLQFKELGVLPHALLNYLVRLGWSHGDQEIFSVQEMITSFDLKNVSRGVSSFNYDKLYWLNQHYQKSDSPESVANALQWHFEQAGIDLNQGPDLKDLVAVQAERCKSLAEMCQISQYFYTDIIEYNEDAVKKHLRPVVLEPLMVLHERLKALDEWKNDKIQECINDVSLQFDLNLGKIAQPLRVAVTGSGTSPSIDMTLALLGKNKSIKRLEDALEKIRARASVV.

The 'HIGH' region signature appears at 9–19 (PSPTGFLHVGG). The 'KMSKS' region motif lies at 236–240 (RLSKR). Lysine 239 is an ATP binding site.

Belongs to the class-I aminoacyl-tRNA synthetase family. Glutamate--tRNA ligase type 1 subfamily. In terms of assembly, monomer.

It is found in the cytoplasm. The enzyme catalyses tRNA(Glu) + L-glutamate + ATP = L-glutamyl-tRNA(Glu) + AMP + diphosphate. Its function is as follows. Catalyzes the attachment of glutamate to tRNA(Glu) in a two-step reaction: glutamate is first activated by ATP to form Glu-AMP and then transferred to the acceptor end of tRNA(Glu). This is Glutamate--tRNA ligase from Legionella pneumophila subsp. pneumophila (strain Philadelphia 1 / ATCC 33152 / DSM 7513).